Reading from the N-terminus, the 501-residue chain is Probable cytosol aminopeptidase (501 aa).

The Mn(2+) site is built by lysine 272 and aspartate 277. Residue lysine 284 is part of the active site. 3 residues coordinate Mn(2+): aspartate 295, aspartate 354, and glutamate 356. The active site involves arginine 358.

It belongs to the peptidase M17 family. Mn(2+) is required as a cofactor.

Its subcellular location is the cytoplasm. The catalysed reaction is Release of an N-terminal amino acid, Xaa-|-Yaa-, in which Xaa is preferably Leu, but may be other amino acids including Pro although not Arg or Lys, and Yaa may be Pro. Amino acid amides and methyl esters are also readily hydrolyzed, but rates on arylamides are exceedingly low.. It carries out the reaction Release of an N-terminal amino acid, preferentially leucine, but not glutamic or aspartic acids.. Presumably involved in the processing and regular turnover of intracellular proteins. Catalyzes the removal of unsubstituted N-terminal amino acids from various peptides. The sequence is that of Probable cytosol aminopeptidase from Buchnera aphidicola subsp. Baizongia pistaciae (strain Bp).